Consider the following 353-residue polypeptide: Methylthioribose-1-phosphate isomerase (353 aa).

Residues 51 to 53 (RGA), R94, and Q199 each bind substrate. D240 functions as the Proton donor in the catalytic mechanism. 250 to 251 (NK) serves as a coordination point for substrate.

Belongs to the eIF-2B alpha/beta/delta subunits family. MtnA subfamily. As to quaternary structure, homodimer.

The enzyme catalyses 5-(methylsulfanyl)-alpha-D-ribose 1-phosphate = 5-(methylsulfanyl)-D-ribulose 1-phosphate. It participates in amino-acid biosynthesis; L-methionine biosynthesis via salvage pathway; L-methionine from S-methyl-5-thio-alpha-D-ribose 1-phosphate: step 1/6. In terms of biological role, catalyzes the interconversion of methylthioribose-1-phosphate (MTR-1-P) into methylthioribulose-1-phosphate (MTRu-1-P). In Bacillus pumilus (strain SAFR-032), this protein is Methylthioribose-1-phosphate isomerase.